The sequence spans 526 residues: Chaperonin GroEL, chloroplastic (526 aa).

ATP is bound by residues 29-32 (TLGP), 86-90 (DGTTT), G412, 476-478 (DAA), and D492.

Belongs to the chaperonin (HSP60) family. As to quaternary structure, forms a cylinder of 14 subunits composed of two heptameric rings stacked back-to-back. Interacts with the co-chaperonin GroES.

It is found in the plastid. It localises to the chloroplast. The catalysed reaction is ATP + H2O + a folded polypeptide = ADP + phosphate + an unfolded polypeptide.. In terms of biological role, together with its co-chaperonin GroES, plays an essential role in assisting protein folding. The GroEL-GroES system forms a nano-cage that allows encapsulation of the non-native substrate proteins and provides a physical environment optimized to promote and accelerate protein folding. This is Chaperonin GroEL, chloroplastic from Cyanidioschyzon merolae (strain NIES-3377 / 10D) (Unicellular red alga).